The sequence spans 553 residues: Arginine--tRNA ligase (553 aa).

A 'HIGH' region motif is present at residues 123 to 133; that stretch reads ANPTGPLTIGR.

The protein belongs to the class-I aminoacyl-tRNA synthetase family. Monomer.

The protein resides in the cytoplasm. The enzyme catalyses tRNA(Arg) + L-arginine + ATP = L-arginyl-tRNA(Arg) + AMP + diphosphate. The sequence is that of Arginine--tRNA ligase from Chlorobium phaeobacteroides (strain BS1).